We begin with the raw amino-acid sequence, 209 residues long: Uracil phosphoribosyltransferase (209 aa).

Residues Arg-79, Arg-104, and 131 to 139 (DPMLATGNS) contribute to the 5-phospho-alpha-D-ribose 1-diphosphate site. Residues Ile-194 and 199-201 (GDA) each bind uracil. Asp-200 is a binding site for 5-phospho-alpha-D-ribose 1-diphosphate.

This sequence belongs to the UPRTase family. The cofactor is Mg(2+).

The catalysed reaction is UMP + diphosphate = 5-phospho-alpha-D-ribose 1-diphosphate + uracil. The protein operates within pyrimidine metabolism; UMP biosynthesis via salvage pathway; UMP from uracil: step 1/1. Allosterically activated by GTP. Catalyzes the conversion of uracil and 5-phospho-alpha-D-ribose 1-diphosphate (PRPP) to UMP and diphosphate. The protein is Uracil phosphoribosyltransferase of Sinorhizobium medicae (strain WSM419) (Ensifer medicae).